The sequence spans 432 residues: Glutamyl-tRNA reductase (432 aa).

Residues 49–52, Ser-107, 112–114, and Gln-118 each bind substrate; these read TCNR and ETQ. The active-site Nucleophile is the Cys-50. 186-191 contacts NADP(+); that stretch reads GAGEMG.

This sequence belongs to the glutamyl-tRNA reductase family. Homodimer.

It carries out the reaction (S)-4-amino-5-oxopentanoate + tRNA(Glu) + NADP(+) = L-glutamyl-tRNA(Glu) + NADPH + H(+). It participates in porphyrin-containing compound metabolism; protoporphyrin-IX biosynthesis; 5-aminolevulinate from L-glutamyl-tRNA(Glu): step 1/2. Catalyzes the NADPH-dependent reduction of glutamyl-tRNA(Glu) to glutamate 1-semialdehyde (GSA). The polypeptide is Glutamyl-tRNA reductase (Campylobacter jejuni subsp. jejuni serotype O:6 (strain 81116 / NCTC 11828)).